The following is a 62-amino-acid chain: Bacteriocin pediocin PA-1 (62 aa).

Residues 1-18 (MKKIEKLTEKEMANIIGG) constitute a propeptide that is removed on maturation. 2 disulfides stabilise this stretch: cysteine 27-cysteine 32 and cysteine 42-cysteine 62. The segment at 40 to 52 (TTCIINNGAMAWA) is hydrophobic.

This sequence belongs to the bacteriocin class IIA/YGNGV family.

The protein localises to the secreted. In terms of biological role, bactericidal activity (effective inhibitor of L.monocytogenes). This is Bacteriocin pediocin PA-1 (pedA) from Pediococcus acidilactici.